Consider the following 200-residue polypeptide: Large ribosomal subunit protein bL25 (200 aa).

It belongs to the bacterial ribosomal protein bL25 family. CTC subfamily. In terms of assembly, part of the 50S ribosomal subunit; part of the 5S rRNA/L5/L18/L25 subcomplex. Contacts the 5S rRNA. Binds to the 5S rRNA independently of L5 and L18.

This is one of the proteins that binds to the 5S RNA in the ribosome where it forms part of the central protuberance. The protein is Large ribosomal subunit protein bL25 of Corynebacterium glutamicum (strain ATCC 13032 / DSM 20300 / JCM 1318 / BCRC 11384 / CCUG 27702 / LMG 3730 / NBRC 12168 / NCIMB 10025 / NRRL B-2784 / 534).